Reading from the N-terminus, the 103-residue chain is Small ribosomal subunit protein uS10 (103 aa).

Belongs to the universal ribosomal protein uS10 family. In terms of assembly, part of the 30S ribosomal subunit.

In terms of biological role, involved in the binding of tRNA to the ribosomes. The protein is Small ribosomal subunit protein uS10 of Bordetella petrii (strain ATCC BAA-461 / DSM 12804 / CCUG 43448).